The primary structure comprises 247 residues: Neurotrophic factor BDNF precursor form (247 aa).

An N-terminal signal peptide occupies residues 1-18 (MTILFLTMVISYFGCMKA). The propeptide occupies 19–128 (APMKEANVRG…AANMSMRVRR (110 aa)). Asparagine 121 carries N-linked (GlcNAc...) asparagine glycosylation. Disulfide bonds link cysteine 141–cysteine 208, cysteine 186–cysteine 237, and cysteine 196–cysteine 239.

The protein belongs to the NGF-beta family. Monomers and homodimers. Binds to NTRK2/TRKB. Can form heterodimers with other neurotrophin family members, such as NTF3 and NTF4 (in vitro), but the physiological relevance of this is not clear. BDNF precursor form: interacts with the heterodimer formed by NGFR and SORCS2. Mature BDNF has much lower affinity for the heterodimer formed by NGFR and SORCS2. In terms of processing, N-glycosylated and glycosulfated, contrary to mature BDNF. Post-translationally, mature BDNF is produced by proteolytic removal of the propeptide, catalyzed by a FURIN family member. In addition, the precursor form is proteolytically cleaved within the propeptide, but this is not an obligatory intermediate for the production of mature BDNF. Can be converted into mature BDNF by plasmin (PLG).

It localises to the secreted. Functionally, important signaling molecule that activates signaling cascades downstream of NTRK2. During development, promotes the survival and differentiation of selected neuronal populations of the peripheral and central nervous systems. Participates in axonal growth, pathfinding and in the modulation of dendritic growth and morphology. Major regulator of synaptic transmission and plasticity at adult synapses in many regions of the CNS. The versatility of BDNF is emphasized by its contribution to a range of adaptive neuronal responses including long-term potentiation (LTP), long-term depression (LTD), certain forms of short-term synaptic plasticity, as well as homeostatic regulation of intrinsic neuronal excitability. Its function is as follows. Important signaling molecule that activates signaling cascades downstream of NTRK2. Activates signaling cascades via the heterodimeric receptor formed by NGFR and SORCS2. Signaling via NGFR and SORCS2 plays a role in synaptic plasticity and long-term depression (LTD). Binding to NGFR and SORCS2 promotes neuronal apoptosis. Promotes neuronal growth cone collapse. This is Neurotrophic factor BDNF precursor form (BDNF) from Ursus arctos (Brown bear).